The chain runs to 477 residues: Aspartyl/glutamyl-tRNA(Asn/Gln) amidotransferase subunit B (477 aa).

This sequence belongs to the GatB/GatE family. GatB subfamily. As to quaternary structure, heterotrimer of A, B and C subunits.

The catalysed reaction is L-glutamyl-tRNA(Gln) + L-glutamine + ATP + H2O = L-glutaminyl-tRNA(Gln) + L-glutamate + ADP + phosphate + H(+). The enzyme catalyses L-aspartyl-tRNA(Asn) + L-glutamine + ATP + H2O = L-asparaginyl-tRNA(Asn) + L-glutamate + ADP + phosphate + 2 H(+). Functionally, allows the formation of correctly charged Asn-tRNA(Asn) or Gln-tRNA(Gln) through the transamidation of misacylated Asp-tRNA(Asn) or Glu-tRNA(Gln) in organisms which lack either or both of asparaginyl-tRNA or glutaminyl-tRNA synthetases. The reaction takes place in the presence of glutamine and ATP through an activated phospho-Asp-tRNA(Asn) or phospho-Glu-tRNA(Gln). In Lawsonia intracellularis (strain PHE/MN1-00), this protein is Aspartyl/glutamyl-tRNA(Asn/Gln) amidotransferase subunit B.